The sequence spans 382 residues: MTNTTGKINLLGLTQPEMEQFFESIGEKRFRAGQVMKWIHHFGVDDFAAMTNVGKALREKLEASAEIRGPEVVSENISADGTRKWVVRVASGSCVETVYIPQNGRGTLCVSSQAGCALDCSFCSTGKQGFNSDLTSAEIIGQVWIANKSFGTVPAKIDRAITNVVMMGMGEPLLNFDNVVSAMQIMMDDLGYGISKRKVTLSTSGVVPMIDKLAEVIDVSLALSLHAPNDELRNQLVPINKKYPLDMLLAACKRYVAKLGEKRVLTIEYTLLKGVNDQPEHAEQMIALLADVPCKINLIPFNPFPFSGYERPSNNAIRRFQDLLHKAGHNVTVRTTRGDDIDAACGQLVGQVMDRTRRSERYIAVRQLGSEAQEPRAAANRN.

E96 functions as the Proton acceptor in the catalytic mechanism. Residues 102–340 form the Radical SAM core domain; that stretch reads QNGRGTLCVS…VTVRTTRGDD (239 aa). An intrachain disulfide couples C109 to C345. Positions 116, 120, and 123 each coordinate [4Fe-4S] cluster. S-adenosyl-L-methionine-binding positions include 170-171, S202, 224-226, and N302; these read GE and SLH. C345 acts as the S-methylcysteine intermediate in catalysis.

Belongs to the radical SAM superfamily. RlmN family. It depends on [4Fe-4S] cluster as a cofactor.

The protein localises to the cytoplasm. The enzyme catalyses adenosine(2503) in 23S rRNA + 2 reduced [2Fe-2S]-[ferredoxin] + 2 S-adenosyl-L-methionine = 2-methyladenosine(2503) in 23S rRNA + 5'-deoxyadenosine + L-methionine + 2 oxidized [2Fe-2S]-[ferredoxin] + S-adenosyl-L-homocysteine. The catalysed reaction is adenosine(37) in tRNA + 2 reduced [2Fe-2S]-[ferredoxin] + 2 S-adenosyl-L-methionine = 2-methyladenosine(37) in tRNA + 5'-deoxyadenosine + L-methionine + 2 oxidized [2Fe-2S]-[ferredoxin] + S-adenosyl-L-homocysteine. Specifically methylates position 2 of adenine 2503 in 23S rRNA and position 2 of adenine 37 in tRNAs. m2A2503 modification seems to play a crucial role in the proofreading step occurring at the peptidyl transferase center and thus would serve to optimize ribosomal fidelity. In Ectopseudomonas mendocina (strain ymp) (Pseudomonas mendocina), this protein is Dual-specificity RNA methyltransferase RlmN.